The primary structure comprises 98 residues: Large ribosomal subunit protein uL23 (98 aa).

The protein belongs to the universal ribosomal protein uL23 family. In terms of assembly, part of the 50S ribosomal subunit. Contacts protein L29, and trigger factor when it is bound to the ribosome.

Its function is as follows. One of the early assembly proteins it binds 23S rRNA. One of the proteins that surrounds the polypeptide exit tunnel on the outside of the ribosome. Forms the main docking site for trigger factor binding to the ribosome. The chain is Large ribosomal subunit protein uL23 from Roseobacter denitrificans (strain ATCC 33942 / OCh 114) (Erythrobacter sp. (strain OCh 114)).